Consider the following 313-residue polypeptide: Proline iminopeptidase (313 aa).

The AB hydrolase-1 domain maps to 35–298 (KPVVILHGGP…TPGAGHSAFE (264 aa)). The Nucleophile role is filled by serine 110. The active site involves aspartate 266. Histidine 294 serves as the catalytic Proton donor.

Belongs to the peptidase S33 family.

The protein localises to the cytoplasm. It carries out the reaction Release of N-terminal proline from a peptide.. In terms of biological role, specifically catalyzes the removal of N-terminal proline residues from peptides. This Xylella fastidiosa (strain 9a5c) protein is Proline iminopeptidase (pip).